The sequence spans 359 residues: Histidinol-phosphate aminotransferase (359 aa).

Lysine 217 bears the N6-(pyridoxal phosphate)lysine mark.

This sequence belongs to the class-II pyridoxal-phosphate-dependent aminotransferase family. Histidinol-phosphate aminotransferase subfamily. In terms of assembly, homodimer. It depends on pyridoxal 5'-phosphate as a cofactor.

It catalyses the reaction L-histidinol phosphate + 2-oxoglutarate = 3-(imidazol-4-yl)-2-oxopropyl phosphate + L-glutamate. It functions in the pathway amino-acid biosynthesis; L-histidine biosynthesis; L-histidine from 5-phospho-alpha-D-ribose 1-diphosphate: step 7/9. The sequence is that of Histidinol-phosphate aminotransferase from Salmonella enteritidis PT4 (strain P125109).